A 432-amino-acid polypeptide reads, in one-letter code: Uracil permease (432 aa).

12 consecutive transmembrane segments (helical) span residues leucine 25–isoleucine 45, valine 65–alanine 85, glycine 89–isoleucine 109, valine 124–methionine 144, leucine 155–alanine 175, leucine 181–valine 201, valine 206–valine 226, valine 228–isoleucine 248, valine 305–glycine 325, leucine 330–isoleucine 350, asparagine 370–serine 390, and phenylalanine 393–proline 413.

This sequence belongs to the nucleobase:cation symporter-2 (NCS2) (TC 2.A.40) family.

Its subcellular location is the cell membrane. Transport of uracil in the cell. The protein is Uracil permease (pyrP) of Bacillus caldolyticus.